The primary structure comprises 58 residues: Small integral membrane protein 11 (58 aa).

Residues 10–32 (PLLLYILAAKTLILCLTFAGVKM) traverse the membrane as a helical segment. Positions 29–58 (GVKMYQRKRLEAKQQKLEAERKKQSEKKDN) form a coiled coil.

Expressed in heart, spleen, liver, stomach, muscle, lung, testis, skin, PBL and bone marrow.

It is found in the membrane. In Homo sapiens (Human), this protein is Small integral membrane protein 11.